Consider the following 313-residue polypeptide: E3 ubiquitin-protein ligase SGIP1 (313 aa).

An F-box domain is found at 16 to 65 (REYSKEIPIDLLIEIFSRLSTGDIARCRCVSKIWSSVPRLRDFTELFLKI).

In terms of assembly, interacts with SGS3 in cytoplasmic granules.

Its subcellular location is the cytoplasmic granule. The catalysed reaction is S-ubiquitinyl-[E2 ubiquitin-conjugating enzyme]-L-cysteine + [acceptor protein]-L-lysine = [E2 ubiquitin-conjugating enzyme]-L-cysteine + N(6)-ubiquitinyl-[acceptor protein]-L-lysine.. Its pathway is protein degradation; proteasomal ubiquitin-dependent pathway. It functions in the pathway protein modification; protein ubiquitination. In terms of biological role, E3 ubiquitin-protein ligase which triggers the ubiquitination and subsequent degradation of SGS3 in response to heat. Involved in the mechanisms necessary for quick response to heat and subsequent heritable transgenerational memory of heat acclimation (global warming) such as early flowering and attenuated immunity; this process includes epigenetic regulation as well as post-transcriptional gene silencing (PTGS). In response to heat, HSFA2 is activated and promotes the expression of REF6 which in turn derepresses HSFA2, thus establishing an inheritable feedback loop able to trigger SGIP1 and subsequent SGIP1-mediated SGS3 degradation; this prevents the biosynthesis of trans-acting siRNA (tasiRNA) and leads to the release of HTT5, which drives early flowering but attenuates immunity. The sequence is that of E3 ubiquitin-protein ligase SGIP1 from Arabidopsis thaliana (Mouse-ear cress).